The primary structure comprises 315 residues: Small ribosomal subunit protein uS2 (315 aa).

The interval 241–315 is disordered; sequence AQHGEERRPG…QPAPGSDANR (75 aa). The segment covering 243–288 has biased composition (basic and acidic residues); that stretch reads HGEERRPGEEDRDAASERGQKDRRDRRDRRGGGRDRERREPREDRA.

This sequence belongs to the universal ribosomal protein uS2 family.

The sequence is that of Small ribosomal subunit protein uS2 from Anaeromyxobacter sp. (strain Fw109-5).